Here is a 190-residue protein sequence, read N- to C-terminus: Acireductone dioxygenase (190 aa).

Fe(2+) is bound by residues His-101, His-103, Glu-107, and His-145. Ni(2+)-binding residues include His-101, His-103, Glu-107, and His-145.

This sequence belongs to the acireductone dioxygenase (ARD) family. Monomer. Fe(2+) serves as cofactor. It depends on Ni(2+) as a cofactor.

The enzyme catalyses 1,2-dihydroxy-5-(methylsulfanyl)pent-1-en-3-one + O2 = 3-(methylsulfanyl)propanoate + CO + formate + 2 H(+). It carries out the reaction 1,2-dihydroxy-5-(methylsulfanyl)pent-1-en-3-one + O2 = 4-methylsulfanyl-2-oxobutanoate + formate + 2 H(+). The protein operates within amino-acid biosynthesis; L-methionine biosynthesis via salvage pathway; L-methionine from S-methyl-5-thio-alpha-D-ribose 1-phosphate: step 5/6. Its function is as follows. Catalyzes 2 different reactions between oxygen and the acireductone 1,2-dihydroxy-3-keto-5-methylthiopentene (DHK-MTPene) depending upon the metal bound in the active site. Fe-containing acireductone dioxygenase (Fe-ARD) produces formate and 2-keto-4-methylthiobutyrate (KMTB), the alpha-ketoacid precursor of methionine in the methionine recycle pathway. Ni-containing acireductone dioxygenase (Ni-ARD) produces methylthiopropionate, carbon monoxide and formate, and does not lie on the methionine recycle pathway. This chain is Acireductone dioxygenase, found in Saccharopolyspora erythraea (strain ATCC 11635 / DSM 40517 / JCM 4748 / NBRC 13426 / NCIMB 8594 / NRRL 2338).